A 220-amino-acid chain; its full sequence is Large ribosomal subunit protein uL3 (220 aa).

It belongs to the universal ribosomal protein uL3 family. As to quaternary structure, part of the 50S ribosomal subunit. Forms a cluster with proteins L14 and L19.

Its function is as follows. One of the primary rRNA binding proteins, it binds directly near the 3'-end of the 23S rRNA, where it nucleates assembly of the 50S subunit. This chain is Large ribosomal subunit protein uL3, found in Staphylococcus haemolyticus (strain JCSC1435).